Reading from the N-terminus, the 437-residue chain is Chaperone SurA (437 aa).

The first 22 residues, 1 to 22, serve as a signal peptide directing secretion; sequence MKNWKFPLISTLLLLLTINVHA. PpiC domains follow at residues 173 to 274 and 283 to 383; these read TVQY…KIDD and VTEV…EVLE.

The protein resides in the periplasm. The enzyme catalyses [protein]-peptidylproline (omega=180) = [protein]-peptidylproline (omega=0). Functionally, chaperone involved in the correct folding and assembly of outer membrane proteins. Recognizes specific patterns of aromatic residues and the orientation of their side chains, which are found more frequently in integral outer membrane proteins. May act in both early periplasmic and late outer membrane-associated steps of protein maturation. This Aliivibrio fischeri (strain ATCC 700601 / ES114) (Vibrio fischeri) protein is Chaperone SurA.